Consider the following 303-residue polypeptide: Regulatory protein PocR (303 aa).

The HTH araC/xylS-type domain occupies 195-293 (KKALRYIDAH…QVTPQAYRQQ (99 aa)). 2 DNA-binding regions (H-T-H motif) span residues 212–233 (EDVA…KKYQ) and 260–283 (IASI…RQTY).

It functions in the pathway cofactor biosynthesis; adenosylcobalamin biosynthesis [regulation]. It participates in polyol metabolism; 1,2-propanediol degradation [regulation]. Positive regulatory protein of pdu and cob operons. Positively autoregulates its own expression. The protein is Regulatory protein PocR (pocR) of Salmonella typhimurium (strain LT2 / SGSC1412 / ATCC 700720).